The chain runs to 635 residues: DNA-directed RNA polymerase III subunit rpc3 (635 aa).

Disordered stretches follow at residues 131–164 (PEQS…SDQQ), 246–295 (VPRG…GYDT), and 386–424 (SGSI…LSSG). A compositionally biased stretch (acidic residues) spans 272-292 (SVDEDDEQDEEENEWSDDEMG). Residues 398 to 407 (DNRRGKRPLE) are compositionally biased toward basic and acidic residues. Over residues 411–424 (NGTNHEGANGLSSG) the composition is skewed to polar residues. Residues 562-583 (TYKAMSRCFQRLRFERNRLKEF) are leucine-zipper.

Belongs to the RNA polymerase beta chain family. As to quaternary structure, component of the RNA polymerase III (Pol III) complex consisting of 17 subunits.

The protein localises to the nucleus. DNA-dependent RNA polymerase catalyzes the transcription of DNA into RNA using the four ribonucleoside triphosphates as substrates. Specific core component of RNA polymerase III which synthesizes small RNAs, such as 5S rRNA and tRNAs. The protein is DNA-directed RNA polymerase III subunit rpc3 (rpc82) of Aspergillus clavatus (strain ATCC 1007 / CBS 513.65 / DSM 816 / NCTC 3887 / NRRL 1 / QM 1276 / 107).